We begin with the raw amino-acid sequence, 357 residues long: UPF0744 protein C106.03 (357 aa).

Ser-282 bears the Phosphoserine mark.

Belongs to the UPF0744 family.

The protein localises to the cytoplasm. This chain is UPF0744 protein C106.03, found in Schizosaccharomyces pombe (strain 972 / ATCC 24843) (Fission yeast).